The primary structure comprises 1310 residues: Major viral transcription factor ICP4 homolog (1310 aa).

3 disordered regions span residues 117–271 (AGAR…GPVE), 285–454 (GAKA…TPII), and 636–696 (GSSP…SLLD). Residues 341-350 (PVEKKPKSRE) show a composition bias toward basic and acidic residues. Composition is skewed to low complexity over residues 351–364 (FVSS…WGSS), 392–407 (PSPS…DGGS), and 648–666 (PSPT…SAAA). Positions 677–685 (RLRTPRKRK) match the Nuclear localization signal motif. 2 positions are modified to phosphoserine; by VZV ORF66: S686 and S722. Disordered stretches follow at residues 1195–1258 (RFVF…SFGV) and 1282–1310 (ELLS…QSRG). Over residues 1217–1227 (RTADDREHALE) the composition is skewed to basic and acidic residues. The span at 1228-1250 (PDDWEVGCEDAWDSEEGGGDDGD) shows a compositional bias: acidic residues.

It belongs to the herpesviridae ICP4 family. As to quaternary structure, interacts with IE4 and IE63. Interacts with human USF1 and SP1. Post-translationally, phosphorylated by ORF66 protein kinase on Ser-686 and Ser-722. Also phosphorylated by ORF47 protein kinase and by human CSNK2A1/CKII.

It localises to the host nucleus. The protein resides in the host cytoplasm. It is found in the virion tegument. Its function is as follows. Transcriptional transactivator. May interact with and recruit specific components of the general transcription machinery to viral promoters and stabilize their formation for transcription initiation. Negatively regulates its own transcription. This immediate early (EI) protein may be necessary in virion for viral pathogenesis. This chain is Major viral transcription factor ICP4 homolog, found in Homo sapiens (Human).